The primary structure comprises 331 residues: Polyprenyl transferase mpaA' (331 aa).

The next 8 helical transmembrane spans lie at 27 to 47, 56 to 76, 127 to 147, 159 to 179, 190 to 210, 240 to 260, 264 to 284, and 295 to 315; these read MPYY…ALKL, IEFI…LCGA, LILD…SIML, VFVY…ITGW, GDII…CVYF, LFLA…ISTI, WLWV…IAQF, and IHWD…VEVG.

This sequence belongs to the UbiA prenyltransferase family. Mg(2+) serves as cofactor.

Its subcellular location is the golgi apparatus membrane. It carries out the reaction 5,7-dihydroxy-4-methylphthalide + (2E,6E)-farnesyl diphosphate = 4-farnesyl-3,5-dihydroxy-6-methylphthalide + diphosphate. It functions in the pathway secondary metabolite biosynthesis; terpenoid biosynthesis. Polyprenyl transferase; part of the gene cluster that mediates the biosynthesis of mycophenolic acid (MPA), the first isolated antibiotic natural product in the world obtained from a culture of Penicillium brevicompactum in 1893. MpaA' is a Golgi apparatus-associated enzyme that catalyzes the prenylation of 5,7-dihydroxy-4,6-dimethylphthalide (DHMP) to yield farnesyl-DHMP (FDHMP). The first step of the pathway is the synthesis of 5-methylorsellinic acid (5MOA) by the cytosolic polyketide synthase mpaC. 5MOA is then converted to the phthalide compound 5,7-dihydroxy-4,6-dimethylphthalide (DHMP) by the endoplasmic reticulum-bound cytochrome P450 monooxygenase mpaDE. MpaDE first catalyzes hydroxylation of 5-MOA to 4,6-dihydroxy-2-(hydroxymethyl)-3-methylbenzoic acid (DHMB). MpaDE then acts as a lactone synthase that catalyzes the ring closure to convert DHMB into DHMP. The next step is the prenylation of DHMP by the Golgi apparatus-associated prenyltransferase mpaA to yield farnesyl-DHMP (FDHMP). The ER-bound oxygenase mpaB then mediates the oxidative cleavage the C19-C20 double bond in FDHMP to yield FDHMP-3C via a mycophenolic aldehyde intermediate. The O-methyltransferase mpaG catalyzes the methylation of FDHMP-3C to yield MFDHMP-3C. After the cytosolic methylation of FDHMP-3C, MFDHMP-3C enters into peroxisomes probably via free diffusion due to its low molecular weight. Upon a peroxisomal CoA ligation reaction, catalyzed by a beta-oxidation component enzyme acyl-CoA ligase ACL891, MFDHMP-3C-CoA would then be restricted to peroxisomes for the following beta-oxidation pathway steps. The peroxisomal beta-oxidation machinery than converts MFDHMP-3C-CoA into MPA_CoA, via a beta-oxidation chain-shortening process. Finally mpaH acts as a peroxisomal acyl-CoA hydrolase with high substrate specificity toward MPA-CoA to release the final product MPA. In Penicillium brevicompactum, this protein is Polyprenyl transferase mpaA'.